The primary structure comprises 409 residues: UV excision repair protein RAD23 homolog B (409 aa).

Positions 1–79 constitute a Ubiquitin-like domain; sequence MQVTLKTLQQ…VVVMVTKPKA (79 aa). The interval 80–175 is disordered; sequence VSTPAPATTQ…STSGDSSRSN (96 aa). The span at 81–143 shows a compositional bias: low complexity; it reads STPAPATTQQ…SSEPAPASAA (63 aa). The span at 144 to 153 shows a compositional bias: basic and acidic residues; that stretch reads KQEKPAEKPA. A Phosphothreonine modification is found at T155. The residue at position 160 (S160) is a Phosphoserine. Residues 160–175 are compositionally biased toward polar residues; that stretch reads SPTATDSTSGDSSRSN. T164 bears the Phosphothreonine mark. A Phosphoserine modification is found at S174. Position 186 is a phosphothreonine (T186). The 41-residue stretch at 188–228 folds into the UBA 1 domain; sequence QSYENMVTEIMSMGYEREQVIAALRASFNNPDRAVEYLLMG. S199 carries the phosphoserine modification. Y202 is modified (phosphotyrosine). Residues 236-276 are disordered; that stretch reads QAVVDPPQAASTGAPQSSAVAAAAATTTATTTTTSSGGHPL. The span at 252–271 shows a compositional bias: low complexity; the sequence is SSAVAAAAATTTATTTTTSS. The STI1 domain occupies 274 to 317; that stretch reads HPLEFLRNQPQFQQMRQIIQQNPSLLPALLQQIGRENPQLLQQI. The UBA 2 domain maps to 364-404; sequence PQEKEAIERLKALGFPEGLVIQAYFACEKNENLAANFLLQQ.

Belongs to the RAD23 family. Component of the XPC complex composed of XPC, RAD23B and CETN2. Interacts with NGLY1 and PSMC1. Interacts with ATXN3. Interacts with PSMD4 and PSMC5. Interacts with AMFR. Interacts with VCP; the interaction is indirect and mediated by NGLY1.

The protein resides in the nucleus. It is found in the cytoplasm. In terms of biological role, multiubiquitin chain receptor involved in modulation of proteasomal degradation. Binds to polyubiquitin chains. Proposed to be capable to bind simultaneously to the 26S proteasome and to polyubiquitinated substrates and to deliver ubiquitinated proteins to the proteasome. May play a role in endoplasmic reticulum-associated degradation (ERAD) of misfolded glycoproteins by association with PNGase and delivering deglycosylated proteins to the proteasome. Its function is as follows. Involved in global genome nucleotide excision repair (GG-NER) by acting as component of the XPC complex. Cooperatively with CETN2 appears to stabilize XPC. May protect XPC from proteasomal degradation. Functionally, the XPC complex is proposed to represent the first factor bound at the sites of DNA damage and together with other core recognition factors, XPA, RPA and the TFIIH complex, is part of the pre-incision (or initial recognition) complex. The XPC complex recognizes a wide spectrum of damaged DNA characterized by distortions of the DNA helix such as single-stranded loops, mismatched bubbles or single-stranded overhangs. The orientation of XPC complex binding appears to be crucial for inducing a productive NER. XPC complex is proposed to recognize and to interact with unpaired bases on the undamaged DNA strand which is followed by recruitment of the TFIIH complex and subsequent scanning for lesions in the opposite strand in a 5'-to-3' direction by the NER machinery. Cyclobutane pyrimidine dimers (CPDs) which are formed upon UV-induced DNA damage esacpe detection by the XPC complex due to a low degree of structural perurbation. Instead they are detected by the UV-DDB complex which in turn recruits and cooperates with the XPC complex in the respective DNA repair. In vitro, the XPC:RAD23B dimer is sufficient to initiate NER; it preferentially binds to cisplatin and UV-damaged double-stranded DNA and also binds to a variety of chemically and structurally diverse DNA adducts. XPC:RAD23B contacts DNA both 5' and 3' of a cisplatin lesion with a preference for the 5' side. XPC:RAD23B induces a bend in DNA upon binding. XPC:RAD23B stimulates the activity of DNA glycosylases TDG and SMUG1. The sequence is that of UV excision repair protein RAD23 homolog B (RAD23B) from Homo sapiens (Human).